The primary structure comprises 702 residues: Pheromone-processing carboxypeptidase KEX1 (702 aa).

Positions 1-19 (MKLILSTLIVFIHTLLVSA) are cleaved as a signal peptide. Residues 20–555 (LPTKEGSDPN…SDSTSSKFTR (536 aa)) are Lumenal-facing. N-linked (GlcNAc...) asparagine glycans are attached at residues Asn-85 and Asn-122. Active-site residues include Ser-184 and Asp-394. Residues Asn-441 and Asn-449 are each glycosylated (N-linked (GlcNAc...) asparagine). Residue His-452 is part of the active site. A disordered region spans residues 491–531 (SRKESDASANGEENAGSDKVPGDSPSQTMDPMISSSTASSS). Residues 556–576 (LIQLAVILVIFWGVYVLYASY) form a helical membrane-spanning segment. Over 577-702 (KSRPSSIIKK…THNQKQKPMN (126 aa)) the chain is Cytoplasmic. 2 disordered regions span residues 582–603 (SIIK…GKKK) and 659–702 (DIEL…KPMN). Composition is skewed to polar residues over residues 587 to 598 (PTNNTSNVTRSS) and 692 to 702 (ATHNQKQKPMN).

The protein belongs to the peptidase S10 family.

It localises to the golgi apparatus. Its subcellular location is the trans-Golgi network membrane. It catalyses the reaction Preferential release of a C-terminal arginine or lysine residue.. Functionally, protease with a carboxypeptidase B-like function involved in the C-terminal processing of the lysine and arginine residues from protein precursors. Promotes cell fusion and is involved in the programmed cell death. The protein is Pheromone-processing carboxypeptidase KEX1 (KEX1) of Candida albicans (strain WO-1) (Yeast).